A 109-amino-acid polypeptide reads, in one-letter code: Nucleoid-associated protein Spea_1509 (109 aa).

The disordered stretch occupies residues 87–109; it reads NQKEKMAEVTGGMQLPPGMKMPF.

The protein belongs to the YbaB/EbfC family. Homodimer.

It is found in the cytoplasm. It localises to the nucleoid. Binds to DNA and alters its conformation. May be involved in regulation of gene expression, nucleoid organization and DNA protection. This Shewanella pealeana (strain ATCC 700345 / ANG-SQ1) protein is Nucleoid-associated protein Spea_1509.